A 161-amino-acid chain; its full sequence is Ribosome maturation factor RimP (161 aa).

The protein belongs to the RimP family.

It is found in the cytoplasm. Required for maturation of 30S ribosomal subunits. This chain is Ribosome maturation factor RimP, found in Desulfosudis oleivorans (strain DSM 6200 / JCM 39069 / Hxd3) (Desulfococcus oleovorans).